Here is a 214-residue protein sequence, read N- to C-terminus: Adenylate kinase (214 aa).

10-15 (GAGKGT) lines the ATP pocket. Residues 30–59 (STGDMLRAAIKAGTELGKQAKAVIDAGQLV) are NMP. Residues threonine 31, arginine 36, 57-59 (QLV), 85-88 (GFPR), and glutamine 92 each bind AMP. Residues 122–159 (GRRAHLPSGRTYHVVYNPPKVEGKDDVTGEDLVVRDDD) are LID. Residues arginine 123 and 132-133 (TY) each bind ATP. 2 residues coordinate AMP: arginine 156 and arginine 167. Residue lysine 200 coordinates ATP.

This sequence belongs to the adenylate kinase family. Monomer.

The protein localises to the cytoplasm. The enzyme catalyses AMP + ATP = 2 ADP. It participates in purine metabolism; AMP biosynthesis via salvage pathway; AMP from ADP: step 1/1. Functionally, catalyzes the reversible transfer of the terminal phosphate group between ATP and AMP. Plays an important role in cellular energy homeostasis and in adenine nucleotide metabolism. The sequence is that of Adenylate kinase from Vibrio vulnificus (strain CMCP6).